The sequence spans 340 residues: DNA-directed RNA polymerase subunit alpha (340 aa).

Positions 1–236 are alpha N-terminal domain (alpha-NTD); sequence MLSLSKNWNT…EQLQLFIAFE (236 aa). The interval 251 to 340 is alpha C-terminal domain (alpha-CTD); it reads FSPYLLKRVD…LSKRYEDSYN (90 aa).

Belongs to the RNA polymerase alpha chain family. In terms of assembly, homodimer. The RNAP catalytic core consists of 2 alpha, 1 beta, 1 beta' and 1 omega subunit. When a sigma factor is associated with the core the holoenzyme is formed, which can initiate transcription.

The enzyme catalyses RNA(n) + a ribonucleoside 5'-triphosphate = RNA(n+1) + diphosphate. DNA-dependent RNA polymerase catalyzes the transcription of DNA into RNA using the four ribonucleoside triphosphates as substrates. This is DNA-directed RNA polymerase subunit alpha from Rickettsia prowazekii (strain Madrid E).